Reading from the N-terminus, the 176-residue chain is Peptidoglycan-associated lipoprotein (176 aa).

The first 32 residues, 1 to 32 (MSRIDTPAASRMQTIARNPVMIALVMTLALAG), serve as a signal peptide directing secretion. Residue Cys33 is the site of N-palmitoyl cysteine attachment. Cys33 is lipidated: S-diacylglycerol cysteine. An OmpA-like domain is found at 58-175 (QQDFTVNVGD…RAVTVLGGAG (118 aa)).

It belongs to the Pal lipoprotein family. The Tol-Pal system is composed of five core proteins: the inner membrane proteins TolA, TolQ and TolR, the periplasmic protein TolB and the outer membrane protein Pal. They form a network linking the inner and outer membranes and the peptidoglycan layer.

The protein localises to the cell outer membrane. Part of the Tol-Pal system, which plays a role in outer membrane invagination during cell division and is important for maintaining outer membrane integrity. The chain is Peptidoglycan-associated lipoprotein from Rhizobium meliloti (strain 1021) (Ensifer meliloti).